We begin with the raw amino-acid sequence, 142 residues long: Large ribosomal subunit protein uL13 (142 aa).

It belongs to the universal ribosomal protein uL13 family. As to quaternary structure, part of the 50S ribosomal subunit.

Functionally, this protein is one of the early assembly proteins of the 50S ribosomal subunit, although it is not seen to bind rRNA by itself. It is important during the early stages of 50S assembly. The sequence is that of Large ribosomal subunit protein uL13 from Pseudomonas paraeruginosa (strain DSM 24068 / PA7) (Pseudomonas aeruginosa (strain PA7)).